An 897-amino-acid polypeptide reads, in one-letter code: Echinoderm microtubule-associated protein-like 3 (897 aa).

N-acetylmethionine is present on M1. A coiled-coil region spans residues 16-43 (LQTLSQRLRVQEEEMELVKAALAEALRL). A compositionally biased stretch (polar residues) spans 51–68 (TTLQGSGISAPTRNSSIT). The disordered stretch occupies residues 51-210 (TTLQGSGISA…GGPGSRRSNY (160 aa)). Composition is skewed to low complexity over residues 96 to 108 (PSSG…NGPP), 118 to 132 (SGTQ…SSGA), and 155 to 164 (RNSSSSSSPS). The span at 175-190 (AASSANLLLRSGSTES) shows a compositional bias: polar residues. Residues S177, S199, and S205 each carry the phosphoserine modification. WD repeat units follow at residues 235-287 (RSLE…LYRP), 296-345 (GGGQ…IWDS), 351-393 (LQEI…VWDC), 399-435 (LAEI…FWNW), 449-488 (RKQG…TWGR), 505-544 (YTIV…QWGP), 550-585 (QEAE…LRGD), 590-627 (FSPV…LWDG), 630-668 (HALA…VLDT), 675-710 (SDVT…IYSV), 717-756 (SSRF…YWDV), 766-824 (RYES…LFQY), and 831-870 (APSR…QWRV). The segment at 876–897 (SGPAPATPSRTPSLSPASSLDV) is disordered. T882 carries the phosphothreonine; by CDK1 modification. Over residues 883–897 (PSRTPSLSPASSLDV) the composition is skewed to polar residues. Residue S884 is modified to Phosphoserine.

Belongs to the WD repeat EMAP family. As to quaternary structure, homotrimer; self-association is mediated by the N-terminal coiled coil. Interacts with EML2 but not with EML1. Interacts (phosphorylated at Thr-882) with TUBG1, HAUS1, HAUS2, HAUS3, HAUS4, HAUS5, HAUS6, HAUS7 and HAUS8. In terms of processing, phosphorylation at Thr-882 during mitosis is required for interaction with TUBG1, HAUS1, HAUS2, HAUS3, HAUS4, HAUS5, HAUS6, HAUS7 and HAUS8 and their recruitment to spindle microtubules.

The protein localises to the cytoplasm. It localises to the cytoskeleton. Its subcellular location is the nucleus. The protein resides in the midbody. It is found in the spindle. Its function is as follows. Regulates mitotic spindle assembly, microtubule (MT)-kinetochore attachment and chromosome separation via recruitment of HAUS augmin-like complex and TUBG1 to the existing MTs and promoting MT-based MT nucleation. Required for proper alignnment of chromosomes during metaphase. This is Echinoderm microtubule-associated protein-like 3 (Eml3) from Mus musculus (Mouse).